We begin with the raw amino-acid sequence, 465 residues long: Putative subtilisin-like proteinase 1 (465 aa).

A signal peptide spans 1 to 17 (MILAIISLSVVICREVS). The 72-residue stretch at 19–90 (YIVMFDQDPS…VKMVVKDSPV (72 aa)) folds into the Inhibitor I9 domain. The Peptidase S8 domain maps to 115–447 (PWGLARVGGS…PSLFNANKKK (333 aa)). Catalysis depends on charge relay system residues Asp-148 and His-180. A disulfide bridge links Cys-329 with Cys-360. Ser-386 serves as the catalytic Charge relay system.

This sequence belongs to the peptidase S8 family.

It is found in the secreted. The protein localises to the extracellular space. May be involved in the degradation of proteins for nutrient acquisition or possess a regulatory function by proteolytic activation of proproteins. This chain is Putative subtilisin-like proteinase 1 (SPL1), found in Encephalitozoon cuniculi (strain GB-M1) (Microsporidian parasite).